A 429-amino-acid chain; its full sequence is Ribosomal protein uS12 methylthiotransferase RimO (429 aa).

In terms of domain architecture, MTTase N-terminal spans 2 to 118 (HNIFLLSLGC…VLRAIGAEYR (117 aa)). Cys-11, Cys-47, Cys-81, Cys-142, Cys-146, and Cys-149 together coordinate [4Fe-4S] cluster. Residues 128–357 (LTPPHYAFLK…MELQETISQE (230 aa)) form the Radical SAM core domain. Residues 360–427 (REFEGNEIVV…PYDLEGEVIG (68 aa)) enclose the TRAM domain.

This sequence belongs to the methylthiotransferase family. RimO subfamily. It depends on [4Fe-4S] cluster as a cofactor.

It is found in the cytoplasm. The catalysed reaction is L-aspartate(89)-[ribosomal protein uS12]-hydrogen + (sulfur carrier)-SH + AH2 + 2 S-adenosyl-L-methionine = 3-methylsulfanyl-L-aspartate(89)-[ribosomal protein uS12]-hydrogen + (sulfur carrier)-H + 5'-deoxyadenosine + L-methionine + A + S-adenosyl-L-homocysteine + 2 H(+). Its function is as follows. Catalyzes the methylthiolation of an aspartic acid residue of ribosomal protein uS12. The sequence is that of Ribosomal protein uS12 methylthiotransferase RimO from Chlorobium limicola (strain DSM 245 / NBRC 103803 / 6330).